A 356-amino-acid chain; its full sequence is Manganese-dependent ADP-ribose/CDP-alcohol diphosphatase (356 aa).

Zn(2+)-binding residues include aspartate 32, glutamine 34, aspartate 81, asparagine 117, histidine 253, histidine 290, and histidine 292.

The protein belongs to the ADPRibase-Mn family. As to quaternary structure, monomer. It depends on Mg(2+) as a cofactor.

The catalysed reaction is CDP-choline + H2O = phosphocholine + CMP + 2 H(+). It carries out the reaction ADP-D-ribose + H2O = D-ribose 5-phosphate + AMP + 2 H(+). It catalyses the reaction CDP-glycerol + H2O = sn-glycerol 3-phosphate + CMP + 2 H(+). Hydrolyzes ADP-ribose, IDP-ribose, CDP-glycerol, CDP-choline and CDP-ethanolamine, but not other non-reducing ADP-sugars or CDP-glucose. In Xenopus laevis (African clawed frog), this protein is Manganese-dependent ADP-ribose/CDP-alcohol diphosphatase (adprm).